Reading from the N-terminus, the 58-residue chain is Small ribosomal subunit protein bS21 (58 aa).

A disordered region spans residues 37–58 (FYEKPSVKRKRKSEAARKRKKF). The segment covering 43–58 (VKRKRKSEAARKRKKF) has biased composition (basic residues).

This sequence belongs to the bacterial ribosomal protein bS21 family.

The sequence is that of Small ribosomal subunit protein bS21 from Streptococcus sanguinis (strain SK36).